The sequence spans 593 residues: Elongation factor 4 (593 aa).

In terms of domain architecture, tr-type G spans 2–181 (DKIRNFCIIA…AVIERIPHPQ (180 aa)). GTP contacts are provided by residues 14-19 (DHGKST) and 128-131 (NKCD).

This sequence belongs to the TRAFAC class translation factor GTPase superfamily. Classic translation factor GTPase family. LepA subfamily.

Its subcellular location is the cell inner membrane. The enzyme catalyses GTP + H2O = GDP + phosphate + H(+). In terms of biological role, required for accurate and efficient protein synthesis under certain stress conditions. May act as a fidelity factor of the translation reaction, by catalyzing a one-codon backward translocation of tRNAs on improperly translocated ribosomes. Back-translocation proceeds from a post-translocation (POST) complex to a pre-translocation (PRE) complex, thus giving elongation factor G a second chance to translocate the tRNAs correctly. Binds to ribosomes in a GTP-dependent manner. In Bacteroides fragilis (strain ATCC 25285 / DSM 2151 / CCUG 4856 / JCM 11019 / LMG 10263 / NCTC 9343 / Onslow / VPI 2553 / EN-2), this protein is Elongation factor 4.